The primary structure comprises 299 residues: Acetylglutamate kinase (299 aa).

Residues Gly-64 to Gly-65, Arg-86, and Asn-197 each bind substrate.

The protein belongs to the acetylglutamate kinase family. ArgB subfamily.

It localises to the cytoplasm. The enzyme catalyses N-acetyl-L-glutamate + ATP = N-acetyl-L-glutamyl 5-phosphate + ADP. It participates in amino-acid biosynthesis; L-arginine biosynthesis; N(2)-acetyl-L-ornithine from L-glutamate: step 2/4. Functionally, catalyzes the ATP-dependent phosphorylation of N-acetyl-L-glutamate. The chain is Acetylglutamate kinase from Persephonella marina (strain DSM 14350 / EX-H1).